A 62-amino-acid chain; its full sequence is Calmodulin regulator protein PCP4 (62 aa).

The tract at residues 1–39 (MSERQSAGATNGKDKTSGDNDGQKKVQEEFDIDMDAPET) is disordered. Positions 12 to 28 (GKDKTSGDNDGQKKVQE) are enriched in basic and acidic residues. Residues 28–40 (EEFDIDMDAPETE) form an acidic; binds calcium and is required for modulating the calcium-binding kinetics of calmodulin region. The IQ domain maps to 39–62 (TERAAVAIQSQFRKFQKKKAGSQS).

Belongs to the PCP4 family. Binds to both calcium-free and calcium-bound calmodulin. The affinity for the calcium-bound form is 50-fold greater.

In terms of biological role, functions as a modulator of calcium-binding by calmodulin. Thereby, regulates calmodulin activity and the different processes it controls. For instance, may play a role in neuronal differentiation through activation of calmodulin-dependent kinase signaling pathways. This chain is Calmodulin regulator protein PCP4, found in Mus musculus (Mouse).